The sequence spans 130 residues: Small ribosomal subunit protein uS9 (130 aa).

Belongs to the universal ribosomal protein uS9 family.

The chain is Small ribosomal subunit protein uS9 from Marinobacter nauticus (strain ATCC 700491 / DSM 11845 / VT8) (Marinobacter aquaeolei).